Consider the following 281-residue polypeptide: F-actin-capping protein subunit alpha (281 aa).

This sequence belongs to the F-actin-capping protein alpha subunit family. In terms of assembly, component of the F-actin capping complex, composed of a heterodimer of an alpha and a beta subunit.

The protein localises to the cytoplasm. The protein resides in the cytoskeleton. Functionally, F-actin-capping proteins bind in a Ca(2+)-independent manner to the fast growing ends of actin filaments (barbed end) thereby blocking the exchange of subunits at these ends. Unlike other capping proteins (such as gelsolin and severin), these proteins do not sever actin filaments. This chain is F-actin-capping protein subunit alpha (acpB), found in Dictyostelium discoideum (Social amoeba).